A 164-amino-acid chain; its full sequence is UPF0201 protein MA_4659 (164 aa).

This sequence belongs to the UPF0201 family.

This Methanosarcina acetivorans (strain ATCC 35395 / DSM 2834 / JCM 12185 / C2A) protein is UPF0201 protein MA_4659.